Here is a 251-residue protein sequence, read N- to C-terminus: UPF0309 protein SCO4393 (251 aa).

The SIS domain maps to 36–220 (LADTVQNGGR…AATLADRGIE (185 aa)).

The protein belongs to the UPF0309 family.

The sequence is that of UPF0309 protein SCO4393 from Streptomyces coelicolor (strain ATCC BAA-471 / A3(2) / M145).